Consider the following 416-residue polypeptide: Gamma-glutamyl phosphate reductase (416 aa).

It belongs to the gamma-glutamyl phosphate reductase family.

The protein localises to the cytoplasm. The catalysed reaction is L-glutamate 5-semialdehyde + phosphate + NADP(+) = L-glutamyl 5-phosphate + NADPH + H(+). It participates in amino-acid biosynthesis; L-proline biosynthesis; L-glutamate 5-semialdehyde from L-glutamate: step 2/2. Catalyzes the NADPH-dependent reduction of L-glutamate 5-phosphate into L-glutamate 5-semialdehyde and phosphate. The product spontaneously undergoes cyclization to form 1-pyrroline-5-carboxylate. The sequence is that of Gamma-glutamyl phosphate reductase from Salmonella agona (strain SL483).